The following is a 212-amino-acid chain: MAQAHRTPQPRAAPSQPRVFKLVLLGSGSVGKSSLALRYVKNDFKSILPTVGCAFFTKVVDVGATSLKLEIWDTAGQEKYHSVCHLYFRGANAALLVYDITRKDSFLKAQQWLKDLEEELHPGEVLVMLVGNKTDLSQEREVTFQEGKEFADSQKLLFMETSAKLNHQVSEVFNTVAQELLQRSDEEGQALRGDAAVALNKGPARQAKCCAH.

Ser29 carries the phosphoserine modification. Positions 31, 32, 33, and 50 each coordinate GTP. The Mg(2+) site is built by Ser33, Thr50, and Asp73. Residues 43–54 (DFKSILPTVGCA) carry the Switch 1 motif. The short motif at 75-91 (AGQEKYHSVCHLYFRGA) is the Switch 2 element. GTP-binding residues include Gly76, Asn132, Lys133, Asp135, and Ala163. 2 S-geranylgeranyl cysteine lipidation sites follow: Cys209 and Cys210.

This sequence belongs to the small GTPase superfamily. Rab family. Mg(2+) serves as cofactor. In terms of tissue distribution, expressed in melanocytes (at protein level).

The protein resides in the recycling endosome membrane. Its subcellular location is the melanosome. It localises to the cell projection. The protein localises to the dendrite. The enzyme catalyses GTP + H2O = GDP + phosphate + H(+). Regulated by guanine nucleotide exchange factors (GEFs) which promote the exchange of bound GDP for free GTP. Regulated by GTPase activating proteins (GAPs) which increase the GTP hydrolysis activity. Inhibited by GDP dissociation inhibitors (GDIs). Its function is as follows. The small GTPases Rab are key regulators of intracellular membrane trafficking, from the formation of transport vesicles to their fusion with membranes. Rabs cycle between an inactive GDP-bound form and an active GTP-bound form that is able to recruit to membranes different set of downstream effectors directly responsible for vesicle formation, movement, tethering and fusion. RAB17 is involved in transcytosis, the directed movement of endocytosed material through the cell and its exocytosis from the plasma membrane at the opposite side. Mainly observed in epithelial cells, transcytosis mediates for instance, the transcellular transport of immunoglobulins from the basolateral surface to the apical surface. Most probably controls membrane trafficking through apical recycling endosomes in a post-endocytic step of transcytosis. Required for melanosome transport and release from melanocytes, it also regulates dendrite and dendritic spine development. May also play a role in cell migration. This chain is Ras-related protein Rab-17, found in Homo sapiens (Human).